The sequence spans 85 residues: U4-theraphotoxin-Hhn1q (85 aa).

The N-terminal stretch at Met1–Ala22 is a signal peptide. A propeptide spanning residues Glu23–Arg48 is cleaved from the precursor. Disulfide bonds link Cys52/Cys66, Cys56/Cys77, and Cys71/Cys82.

This sequence belongs to the neurotoxin 12 (Hwtx-2) family. 02 (Hwtx-2) subfamily. Expressed by the venom gland.

The protein resides in the secreted. In terms of biological role, postsynaptic neurotoxin. The polypeptide is U4-theraphotoxin-Hhn1q (Cyriopagopus hainanus (Chinese bird spider)).